We begin with the raw amino-acid sequence, 584 residues long: Breast carcinoma-amplified sequence 1 (584 aa).

Disordered stretches follow at residues 1–29 (MGNQ…NASA), 59–280 (VATS…AAAI), and 297–377 (PNKA…GKLF). 2 stretches are compositionally biased toward polar residues: residues 59–69 (VATSSPETTEI) and 112–128 (ADSS…SNKA). A phosphoserine mark is found at S124 and S192. Basic and acidic residues-rich tracts occupy residues 186 to 226 (SKPK…KVDE), 238 to 252 (PAGK…KEGQ), and 300 to 311 (AETKKDPEDTGA). Phosphoserine is present on S314. Over residues 314–354 (SPTTSADLKSDKANFTSQETQGAGKNSKGCNPSGHTQSVTT) the composition is skewed to polar residues. The segment covering 357–366 (PAKEGTKEKS) has biased composition (basic and acidic residues). A phosphoserine mark is found at S381 and S399. The segment at 415–584 (TVDLNEGDAA…VSIGPVGKSK (170 aa)) is disordered. Over residues 428–439 (TEAKLKREESKP) the composition is skewed to basic and acidic residues. T480 carries the phosphothreonine modification. Positions 494–506 (KGKEGSSKDKKSA) are enriched in basic and acidic residues. Residues 525-540 (CTEQATVDTNSLQNGD) are compositionally biased toward polar residues. Basic and acidic residues predominate over residues 541–550 (KLQKRPEKRQ). Position 552 is a phosphoserine (S552). An interacts with DYNLL1 and DYNLL2 region spans residues 565 to 584 (MLDAQVQTDPVSIGPVGKSK).

Homodimer. Interacts with DYNLL1 and DYNLL2. In terms of tissue distribution, highly expressed in the brain and, more specifically, in oligodendrocytes (at protein level). Expressed in the prostate, and at lower levels in testis, intestine and colon. Overexpressed in most breast cancer cell lines and down-regulated in some colorectal tumors.

The protein localises to the cytoplasm. In terms of biological role, required for myelination. This Homo sapiens (Human) protein is Breast carcinoma-amplified sequence 1 (BCAS1).